Consider the following 508-residue polypeptide: Photosystem II CP47 reaction center protein (508 aa).

6 consecutive transmembrane segments (helical) span residues 21–36 (SVHIMHTALVAGWAGS), 101–115 (IVFSGLCFLAAIWHW), 140–156 (GIHLFLSGVACFGFGAF), 203–218 (IAAGTLGILAGLFHLS), 237–252 (VLSSSIAAVFFAAFVV), and 457–472 (SFALLFFFGHIWHGSR).

It belongs to the PsbB/PsbC family. PsbB subfamily. As to quaternary structure, PSII is composed of 1 copy each of membrane proteins PsbA, PsbB, PsbC, PsbD, PsbE, PsbF, PsbH, PsbI, PsbJ, PsbK, PsbL, PsbM, PsbT, PsbX, PsbY, PsbZ, Psb30/Ycf12, at least 3 peripheral proteins of the oxygen-evolving complex and a large number of cofactors. It forms dimeric complexes. Binds multiple chlorophylls. PSII binds additional chlorophylls, carotenoids and specific lipids. serves as cofactor.

It is found in the plastid. The protein resides in the chloroplast thylakoid membrane. Its function is as follows. One of the components of the core complex of photosystem II (PSII). It binds chlorophyll and helps catalyze the primary light-induced photochemical processes of PSII. PSII is a light-driven water:plastoquinone oxidoreductase, using light energy to abstract electrons from H(2)O, generating O(2) and a proton gradient subsequently used for ATP formation. In Capsella bursa-pastoris (Shepherd's purse), this protein is Photosystem II CP47 reaction center protein.